The chain runs to 86 residues: uncharacterized protein (86 aa).

2 TPR repeats span residues 8 to 41 (AEYY…NPFY) and 42 to 75 (RDAW…EKHL).

This is an uncharacterized protein from Methanocaldococcus jannaschii (strain ATCC 43067 / DSM 2661 / JAL-1 / JCM 10045 / NBRC 100440) (Methanococcus jannaschii).